The sequence spans 391 residues: MAAVTWSRARCWCPSLLQVLRLPVTKLHLGRPAMRATQQDFENAMNQVKLLKKDPGNEVKLRLYALYKQATEGPCTMPKPGVFDFVNKAKWDAWNALGSLPKETARQNYVDLVSSLSSSSEASSQGKGGADGKAQESKGILVTSEGGITKITFNRPSKKNAITFQMYQDIILALKNASTDDTVITVFTGAGDYYSSGNDLTNFTSASGGMEEAANKGAIVLREFVNTFIDFPKPLVAVVNGPAVGISVTLLGLFDAVYASDRATFHTPFSHLGQSPEACSSYTFPKMMGSAKAAEMLLFGKKLTAREAWAQGLVTEVFPESTFETEVWTRLKTYAKLPPNSMRISKELIRKNEKEKLHAVNEEECTTLRARWLSEECINAIMSFVTRKPKL.

The N-terminal 36 residues, 1–36 (MAAVTWSRARCWCPSLLQVLRLPVTKLHLGRPAMRA), are a transit peptide targeting the mitochondrion. Residues 37–122 (TQQDFENAMN…VSSLSSSSEA (86 aa)) form the ACB domain. Position 49 is an N6-acetyllysine; alternate (Lys-49). Lys-49 carries the post-translational modification N6-succinyllysine; alternate. N6-succinyllysine is present on Lys-53. Lys-60 is modified (N6-acetyllysine; alternate). The residue at position 60 (Lys-60) is an N6-succinyllysine; alternate. 64-68 (YALYK) is a binding site for an acyl-CoA. Lys-68, Lys-79, and Lys-88 each carry N6-succinyllysine. Lys-90 carries the N6-acetyllysine; alternate modification. N6-succinyllysine; alternate is present on Lys-90. Lys-90 serves as a coordination point for an acyl-CoA. Ser-99 carries the post-translational modification Phosphoserine. Residue Tyr-109 coordinates an acyl-CoA. Residue Ser-117 is modified to Phosphoserine. An N6-succinyllysine mark is found at Lys-127 and Lys-159. An ECH-like region spans residues 149 to 319 (TKITFNRPSK…AQGLVTEVFP (171 aa)). 196-200 (SGNDL) serves as a coordination point for substrate. At Lys-286 the chain carries N6-succinyllysine. The Microbody targeting signal signature appears at 389–391 (PKL).

In the C-terminal section; belongs to the enoyl-CoA hydratase/isomerase family. Liver (at protein level).

It localises to the peroxisome matrix. The protein resides in the mitochondrion. The catalysed reaction is a (3Z)-enoyl-CoA = a 4-saturated (2E)-enoyl-CoA. It catalyses the reaction a (3E)-enoyl-CoA = a 4-saturated (2E)-enoyl-CoA. It carries out the reaction (2E)-tetradecenoyl-CoA = (3Z)-tetradecenoyl-CoA. The enzyme catalyses (3E)-tetradecenoyl-CoA = (2E)-tetradecenoyl-CoA. The catalysed reaction is (3E)-octenoyl-CoA = (2E)-octenoyl-CoA. It catalyses the reaction (3Z)-octenoyl-CoA = (2E)-octenoyl-CoA. It carries out the reaction (3E)-nonenoyl-CoA = (2E)-nonenoyl-CoA. Its pathway is lipid metabolism; fatty acid beta-oxidation. Its function is as follows. Able to isomerize both 3-cis and 3-trans double bonds into the 2-trans form in a range of enoyl-CoA species. Has a preference for 3-trans substrates. This chain is Enoyl-CoA delta isomerase 2, found in Rattus norvegicus (Rat).